A 140-amino-acid polypeptide reads, in one-letter code: Alkaline proteinase inhibitor (140 aa).

The signal sequence occupies residues M1–A25.

The protein belongs to the protease inhibitor I38 family.

It localises to the periplasm. In terms of biological role, inhibitor of the alkaline protease. This Pseudomonas brassicacearum (strain NFM421) protein is Alkaline proteinase inhibitor (inh).